Here is a 294-residue protein sequence, read N- to C-terminus: Major pollen allergen Pha a 5.3 (294 aa).

An N-terminal signal peptide occupies residues 1 to 25 (MAVQKYTVALFLAMALVAGPAASYA).

The protein belongs to the Poa p IX/Phl p VI allergen family.

This is Major pollen allergen Pha a 5.3 from Phalaris aquatica (Canary grass).